The primary structure comprises 127 residues: uncharacterized protein (127 aa).

Positions 1–127 (MKIVVTSIFV…CGNLIQIVQK (127 aa)) constitute a VOC domain.

The protein belongs to the glyoxalase I family.

This is an uncharacterized protein from Bacillus subtilis (strain 168).